The following is a 1072-amino-acid chain: 5'-3' exoribonuclease 2 (1072 aa).

A coiled-coil region spans residues 118–144 (RRFRAAREAMEKEEDKQKFVELLKKQN). The segment at 269–286 (RLCKICGQKGHDAMNCKG) adopts a CCHC-type zinc-finger fold. Over residues 414–435 (KETEDRREAGFKRRKLADEARQ) the composition is skewed to basic and acidic residues. Disordered regions lie at residues 414–459 (KETE…GFSF), 509–577 (QGTS…AEPT), 865–911 (ASRS…GGGG), and 943–1072 (GGGY…RGYR). The segment covering 518-543 (AESTETPAETAAAAPATEEQAAPPAA) has biased composition (low complexity). Gly residues predominate over residues 892–911 (GPGGGQQGGRGRGGYQGGGG). The segment covering 955–967 (GPPPGWQPPPPPG) has biased composition (pro residues). Composition is skewed to gly residues over residues 983-1000 (AYGG…GSSR), 1025-1036 (YGQGGSRGGYQG), and 1056-1072 (GYRG…RGYR).

It belongs to the 5'-3' exonuclease family. XRN2/RAT1 subfamily. As to quaternary structure, interacts with rai1; the interaction is direct, stabilizes exr-1 protein structure and may stimulate its exoribonuclease activity. The interaction also stimulates rai1 pyrophosphohydrolase activity, probably by recruiting it to mRNA substrates.

Its subcellular location is the nucleus. Its function is as follows. Possesses 5'-&gt;3' exoribonuclease activity. Required for the processing of nuclear mRNA and rRNA precursors. May promote the termination of transcription by RNA polymerase II. Essential for vegetative cell growth and chromosome segregation. The sequence is that of 5'-3' exoribonuclease 2 (exr-1) from Neurospora crassa (strain ATCC 24698 / 74-OR23-1A / CBS 708.71 / DSM 1257 / FGSC 987).